A 209-amino-acid polypeptide reads, in one-letter code: Kunitz trypsin inhibitor 1 (209 aa).

The N-terminal stretch at 1–22 (MKATISITTIFLVVALAAPSLA) is a signal peptide. 2 cysteine pairs are disulfide-bonded: Cys-63–Cys-107 and Cys-154–Cys-162. Asn-156 carries N-linked (GlcNAc...) asparagine glycosylation.

It belongs to the protease inhibitor I3 (leguminous Kunitz-type inhibitor) family.

Its function is as follows. Exhibits Kunitz trypsin protease inhibitor activity. This chain is Kunitz trypsin inhibitor 1, found in Arabidopsis thaliana (Mouse-ear cress).